The chain runs to 575 residues: Trihelix transcription factor GT-2 (575 aa).

Over residues 1 to 11 the composition is skewed to low complexity; that stretch reads MSGNSEGLLES. 4 disordered regions span residues 1–44, 157–181, 232–256, and 339–364; these read MSGN…RWPR, IPWI…HQVS, FSSS…SSRK, and GGQP…DHSI. A Myb-like 1 domain is found at 40-98; sequence NRWPRPETLALLRIRSEMDKAFRDSTLKAPLWEEISRKMMELGYKRSSKKCKEKFENVY. 2 stretches are compositionally biased toward low complexity: residues 161-172 and 232-241; these read SSSNPSTEKSSS and FSSSTSSSTA. Residues 355–364 are compositionally biased toward polar residues; the sequence is RKQYQSDHSI. A Myb-like 2 domain is found at 390–454; it reads SVSPSSSRWP…RCKEKWENIN (65 aa). The interval 513–575 is disordered; sequence TQTEFETDQR…PMDINNNLFT (63 aa). Residues 528–555 are compositionally biased toward acidic residues; sequence KEDEEEGESEEDEYDEEEEGEGDNETSE. Residues 561–575 are compositionally biased toward polar residues; it reads NKTSSPMDINNNLFT.

The protein localises to the nucleus. Functionally, probable transcription factor that binds specific DNA sequence. This is Trihelix transcription factor GT-2 (GT-2) from Arabidopsis thaliana (Mouse-ear cress).